The chain runs to 456 residues: 26S proteasome non-ATPase regulatory subunit 12 (456 aa).

Ala-2 is modified (N-acetylalanine). Residue Lys-92 forms a Glycyl lysine isopeptide (Lys-Gly) (interchain with G-Cter in SUMO1); alternate linkage. Lys-92 is covalently cross-linked (Glycyl lysine isopeptide (Lys-Gly) (interchain with G-Cter in SUMO2); alternate). N6-acetyllysine is present on residues Lys-221 and Lys-368. The PCI domain occupies 242–420 (SICKHYRAIY…GIINFQRPKD (179 aa)).

The protein belongs to the proteasome subunit p55 family. In terms of assembly, component of the 19S proteasome regulatory particle complex. The 26S proteasome consists of a 20S core particle (CP) and two 19S regulatory subunits (RP). The regulatory particle is made of a lid composed of 9 subunits including PSMD12, a base containing 6 ATPases and few additional components. Interacts with ERCC6.

Its function is as follows. Component of the 26S proteasome, a multiprotein complex involved in the ATP-dependent degradation of ubiquitinated proteins. This complex plays a key role in the maintenance of protein homeostasis by removing misfolded or damaged proteins, which could impair cellular functions, and by removing proteins whose functions are no longer required. Therefore, the proteasome participates in numerous cellular processes, including cell cycle progression, apoptosis, or DNA damage repair. In Bos taurus (Bovine), this protein is 26S proteasome non-ATPase regulatory subunit 12 (PSMD12).